Reading from the N-terminus, the 341-residue chain is Fe-S cluster assembly protein DRE2 (341 aa).

The N-terminal SAM-like domain stretch occupies residues 1 to 157; sequence MNTLLLLHPT…FKKLSSPPTL (157 aa). A disordered region spans residues 151–171; the sequence is LSSPPTLTDSSEADEDEESQL. The tract at residues 157 to 204 is linker; the sequence is LTDSSEADEDEESQLNEKLKGSKLIYFDESSDDEIIDEDELLRDDDGA. The span at 161-170 shows a compositional bias: acidic residues; sequence SEADEDEESQ. [2Fe-2S] cluster contacts are provided by Cys-215, Cys-227, Cys-230, and Cys-232. The fe-S binding site A stretch occupies residues 215–232; the sequence is CALPNGKRRKKACKDCTC. Positions 304, 307, 315, and 318 each coordinate [4Fe-4S] cluster. Short sequence motifs (cx2C motif) lie at residues 304–307 and 315–318; these read CGSC and CDGC. A fe-S binding site B region spans residues 304–318; the sequence is CGSCALGDAFRCDGC.

Belongs to the anamorsin family. Monomer. Interacts with TAH18. Interacts with MIA40. It depends on [2Fe-2S] cluster as a cofactor. [4Fe-4S] cluster is required as a cofactor.

The protein localises to the cytoplasm. It localises to the mitochondrion intermembrane space. Functionally, component of the cytosolic iron-sulfur (Fe-S) protein assembly (CIA) machinery required for the maturation of extramitochondrial Fe-S proteins. Part of an electron transfer chain functioning in an early step of cytosolic Fe-S biogenesis, facilitating the de novo assembly of a [4Fe-4S] cluster on the scaffold complex CFD1-NBP35. Electrons are transferred to DRE2 from NADPH via the FAD- and FMN-containing protein TAH18. TAH18-DRE2 are also required for the assembly of the diferric tyrosyl radical cofactor of ribonucleotide reductase (RNR), probably by providing electrons for reduction during radical cofactor maturation in the catalytic small subunit RNR2. This chain is Fe-S cluster assembly protein DRE2, found in Komagataella phaffii (strain GS115 / ATCC 20864) (Yeast).